The following is a 424-amino-acid chain: Serine--tRNA ligase (424 aa).

Residue 232–234 (TAE) coordinates L-serine. 263 to 265 (RQE) is a binding site for ATP. L-serine is bound at residue glutamate 286. An ATP-binding site is contributed by 350–353 (EIGS). An L-serine-binding site is contributed by serine 386.

It belongs to the class-II aminoacyl-tRNA synthetase family. Type-1 seryl-tRNA synthetase subfamily. Homodimer. The tRNA molecule binds across the dimer.

The protein resides in the cytoplasm. The enzyme catalyses tRNA(Ser) + L-serine + ATP = L-seryl-tRNA(Ser) + AMP + diphosphate + H(+). It carries out the reaction tRNA(Sec) + L-serine + ATP = L-seryl-tRNA(Sec) + AMP + diphosphate + H(+). Its pathway is aminoacyl-tRNA biosynthesis; selenocysteinyl-tRNA(Sec) biosynthesis; L-seryl-tRNA(Sec) from L-serine and tRNA(Sec): step 1/1. Functionally, catalyzes the attachment of serine to tRNA(Ser). Is also able to aminoacylate tRNA(Sec) with serine, to form the misacylated tRNA L-seryl-tRNA(Sec), which will be further converted into selenocysteinyl-tRNA(Sec). This chain is Serine--tRNA ligase, found in Aster yellows witches'-broom phytoplasma (strain AYWB).